The chain runs to 90 residues: Small ribosomal subunit protein bS16 (90 aa).

This sequence belongs to the bacterial ribosomal protein bS16 family.

The protein is Small ribosomal subunit protein bS16 of Lactobacillus delbrueckii subsp. bulgaricus (strain ATCC 11842 / DSM 20081 / BCRC 10696 / JCM 1002 / NBRC 13953 / NCIMB 11778 / NCTC 12712 / WDCM 00102 / Lb 14).